The sequence spans 369 residues: tRNA/tmRNA (uracil-C(5))-methyltransferase (369 aa).

S-adenosyl-L-methionine contacts are provided by glutamine 190, tyrosine 218, asparagine 223, glutamate 239, and aspartate 301. The active-site Nucleophile is cysteine 326. Glutamate 360 serves as the catalytic Proton acceptor.

This sequence belongs to the class I-like SAM-binding methyltransferase superfamily. RNA M5U methyltransferase family. TrmA subfamily.

It catalyses the reaction uridine(54) in tRNA + S-adenosyl-L-methionine = 5-methyluridine(54) in tRNA + S-adenosyl-L-homocysteine + H(+). The enzyme catalyses uridine(341) in tmRNA + S-adenosyl-L-methionine = 5-methyluridine(341) in tmRNA + S-adenosyl-L-homocysteine + H(+). Dual-specificity methyltransferase that catalyzes the formation of 5-methyluridine at position 54 (m5U54) in all tRNAs, and that of position 341 (m5U341) in tmRNA (transfer-mRNA). The polypeptide is tRNA/tmRNA (uracil-C(5))-methyltransferase (Vibrio atlanticus (strain LGP32) (Vibrio splendidus (strain Mel32))).